Here is a 534-residue protein sequence, read N- to C-terminus: Peptide chain release factor 3 (534 aa).

The tr-type G domain occupies A9–Q278. GTP-binding positions include S18–T25, D86–H90, and N140–D143.

The protein belongs to the TRAFAC class translation factor GTPase superfamily. Classic translation factor GTPase family. PrfC subfamily.

The protein localises to the cytoplasm. Increases the formation of ribosomal termination complexes and stimulates activities of RF-1 and RF-2. It binds guanine nucleotides and has strong preference for UGA stop codons. It may interact directly with the ribosome. The stimulation of RF-1 and RF-2 is significantly reduced by GTP and GDP, but not by GMP. This Xylella fastidiosa (strain M23) protein is Peptide chain release factor 3.